Reading from the N-terminus, the 171-residue chain is MPLLDSFTVDHTRMAAPAVRVAKTMKTPHGDNITVFDLRFCRPNIEVMPERGIHTLEHLFAGFMRDHLNGDGVEIIDISPMGCRTGFYMSLIGTPDEQRVAESWKAAMSDVLKVTDQRKIPELNEYQCGTYDMHSLKEAQEIAQHIVDHDIGINQNDDLALPKDKLAELHI.

Fe cation is bound by residues His54, His58, and Cys128.

It belongs to the LuxS family. In terms of assembly, homodimer. The cofactor is Fe cation.

It catalyses the reaction S-(5-deoxy-D-ribos-5-yl)-L-homocysteine = (S)-4,5-dihydroxypentane-2,3-dione + L-homocysteine. Functionally, involved in the synthesis of autoinducer 2 (AI-2) which is secreted by bacteria and is used to communicate both the cell density and the metabolic potential of the environment. The regulation of gene expression in response to changes in cell density is called quorum sensing. Catalyzes the transformation of S-ribosylhomocysteine (RHC) to homocysteine (HC) and 4,5-dihydroxy-2,3-pentadione (DPD). This chain is S-ribosylhomocysteine lyase, found in Pectobacterium atrosepticum (strain SCRI 1043 / ATCC BAA-672) (Erwinia carotovora subsp. atroseptica).